Here is a 218-residue protein sequence, read N- to C-terminus: 3,4-dihydroxy-2-butanone 4-phosphate synthase (218 aa).

D-ribulose 5-phosphate contacts are provided by residues 38 to 39 (RE), Asp-43, 151 to 155 (RRGHT), and Glu-175. Glu-39 is a binding site for Mg(2+). Mg(2+) is bound at residue His-154.

Belongs to the DHBP synthase family. In terms of assembly, homodimer. Requires Mg(2+) as cofactor. Mn(2+) is required as a cofactor.

It catalyses the reaction D-ribulose 5-phosphate = (2S)-2-hydroxy-3-oxobutyl phosphate + formate + H(+). It participates in cofactor biosynthesis; riboflavin biosynthesis; 2-hydroxy-3-oxobutyl phosphate from D-ribulose 5-phosphate: step 1/1. Its function is as follows. Catalyzes the conversion of D-ribulose 5-phosphate to formate and 3,4-dihydroxy-2-butanone 4-phosphate. The polypeptide is 3,4-dihydroxy-2-butanone 4-phosphate synthase (Vibrio atlanticus (strain LGP32) (Vibrio splendidus (strain Mel32))).